The chain runs to 191 residues: Putative glutathione-dependent formaldehyde-activating enzyme (191 aa).

Residues 20–166 enclose the CENP-V/GFA domain; sequence FAGGKLRCHC…FKALGLQTYD (147 aa). Zn(2+) is bound by residues Cys27, Cys29, Cys48, Cys50, Cys53, Cys95, and Cys98.

This sequence belongs to the Gfa family. Zn(2+) is required as a cofactor.

It catalyses the reaction S-(hydroxymethyl)glutathione = glutathione + formaldehyde. Its pathway is one-carbon metabolism; formaldehyde degradation; formate from formaldehyde (glutathione route): step 1/3. Catalyzes the condensation of formaldehyde and glutathione to S-hydroxymethylglutathione. The chain is Putative glutathione-dependent formaldehyde-activating enzyme from Penicillium rubens (strain ATCC 28089 / DSM 1075 / NRRL 1951 / Wisconsin 54-1255) (Penicillium chrysogenum).